We begin with the raw amino-acid sequence, 132 residues long: Group 2 truncated hemoglobin YjbI (132 aa).

Residues Thr-45, Lys-48, Tyr-63, and His-76 each coordinate heme.

Belongs to the truncated hemoglobin family. Group II subfamily. As to quaternary structure, monomer. It depends on heme as a cofactor.

In terms of biological role, hemoglobin-like protein that exhibits a low peroxidase activity. Its very high oxygen affinity may rule out the possibility that it is involved in oxygen transport. This Bacillus subtilis (strain 168) protein is Group 2 truncated hemoglobin YjbI (yjbI).